The following is a 241-amino-acid chain: Outer membrane protein assembly factor BamD (241 aa).

A signal peptide spans 1-17 (MKYQTLSGLLALSLLFG). C18 carries the N-palmitoyl cysteine lipid modification. A lipid anchor (S-diacylglycerol cysteine) is attached at C18.

This sequence belongs to the BamD family. As to quaternary structure, part of the Bam complex.

The protein resides in the cell outer membrane. In terms of biological role, part of the outer membrane protein assembly complex, which is involved in assembly and insertion of beta-barrel proteins into the outer membrane. The sequence is that of Outer membrane protein assembly factor BamD from Vibrio cholerae serotype O1 (strain ATCC 39315 / El Tor Inaba N16961).